The following is a 315-amino-acid chain: DDRGK domain-containing protein 1 (315 aa).

The chain crosses the membrane as a helical span at residues 1-28 (MVGPWVYLVAAVLLIGLILFLTRSRGRA). Positions 1 to 115 (MVGPWVYLVA…IEKPAEVHPT (115 aa)) are mediates interaction with CDK5RAP3. Topologically, residues 29–315 (AAADGEPLHN…GQDLPAQASA (287 aa)) are cytoplasmic. Residues 30 to 184 (AADGEPLHNE…ERKAQEEQAR (155 aa)) are disordered. Residues 34-43 (EPLHNEEERA) are compositionally biased toward basic and acidic residues. Serine 73 is subject to Phosphoserine. The interval 119–217 (GAKKLRKLEE…MTEEQSHSFL (99 aa)) is mediates interaction with TRIP4. A compositionally biased stretch (basic and acidic residues) spans 125–184 (KLEEKQARKAQREAEEAEREERKRLESQREAEWKKEEERLRLKEEQKEEEERKAQEEQAR). A UFM1-interacting motif (UFIM) motif is present at residues 196–210 (AFVVEEEGVSETMTE). Residues 217–315 (LTEFINYIKK…GQDLPAQASA (99 aa)) are mediates interaction with UFL1. Positions 230–274 (VLLEDLAFQMGLRTQDAINRIQDLLTEGTLTGVIDDRGKFIYITP) constitute a PCI domain. Lysine 268 is covalently cross-linked (Glycyl lysine isopeptide (Lys-Gly) (interchain with G-Cter in UFM1)).

It belongs to the DDRGK1 family. Component of the UFM1 ribosome E3 ligase (UREL) complex, composed of UFL1, DDRGK1 and CDK5RAP3. Interacts with (unphosphorylated) ERN1/IRE1-alpha; interaction is dependent on UFM1 and takes place in response to endoplasmic reticulum stress, regulating ERN1/IRE1-alpha stability. Interacts with NFKBIA. Interacts with SOX9. In terms of processing, ufmylated; conjugated to ubiquitin-like protein UFM1, probably at Lys-268 by UFL1. The relevance of ufmylation is however unclear: as DDRGK1 acts as a substrate adapter for ufmylation, it is uncertain whether ufmylation is a collateral effect of the ufmylation process or whether it is required to regulate its activity. Post-translationally, ubiquitinated. Ubiquitination probably triggers proteasomal degradation and is negatively regulated by UFL1, the enzyme involved in the ufmylation of DDRGK1. As to expression, ubiquitously expressed. Higher expression in pancreatic islets, pancreatic acini and testis (at protein level). Highly expressed in the intestinal exocrine cells.

It is found in the endoplasmic reticulum membrane. Its function is as follows. Component of the UFM1 ribosome E3 ligase (UREL) complex, a multiprotein complex that catalyzes ufmylation of endoplasmic reticulum-docked proteins. The UREL complex plays a key role in ribosome recycling by mediating mono-ufmylation of the RPL26/uL24 subunit of the 60S ribosome following ribosome dissociation: ufmylation weakens the junction between post-termination 60S subunits and SEC61 translocons, promoting release and recycling of the large ribosomal subunit from the endoplasmic reticulum membrane. Ufmylation of RPL26/uL24 and subsequent 60S ribosome recycling either take place after normal termination of translation or after ribosome stalling during cotranslational translocation at the endoplasmic reticulum. Within the UREL complex, DDRGK1 tethers the complex to the endoplasmic reticulum membrane to restrict its activity to endoplasmic reticulum-docked ribosomes and acts as an ufmylation 'reader': following RPL26/uL24 ufmylation, DDRGK1 specifically binds to ufmylated RPL26/uL24 via its UFIM motif, resulting in stable association between the 60S ribosome and the UREL complex, followed by dissociation of the 60S ribosome subunit from the endoplasmic reticulum membrane. The UREL complex is also involved in reticulophagy in response to endoplasmic reticulum stress by promoting ufmylation of proteins such as CYB5R3 and RPN1, thereby promoting lysosomal degradation of ufmylated proteins. Ufmylation-dependent reticulophagy inhibits the unfolded protein response (UPR) by regulating ERN1/IRE1-alpha stability. Acts as a regulator of immunity by promoting differentiation of B-cells into plasma cells: acts by promoting expansion of the endoplasmic reticulum and regulating the unfolded protein response (UPR). May also be required for TRIP4 ufmylation. May play a role in NF-kappa-B-mediated transcription through regulation of the phosphorylation and the degradation of NFKBIA, the inhibitor of NF-kappa-B. Plays a role in cartilage development through SOX9, inhibiting the ubiquitin-mediated proteasomal degradation of this transcriptional regulator. Required for stabilization and ufmylation of ATG9A. The chain is DDRGK domain-containing protein 1 from Mus musculus (Mouse).